Consider the following 379-residue polypeptide: Putative acetyl-CoA C-acetyltransferase VraB (379 aa).

Cys-86 serves as the catalytic Acyl-thioester intermediate. Catalysis depends on His-338, which acts as the Proton acceptor.

The protein belongs to the thiolase-like superfamily. Thiolase family.

The chain is Putative acetyl-CoA C-acetyltransferase VraB (vraB) from Staphylococcus aureus (strain MSSA476).